We begin with the raw amino-acid sequence, 704 residues long: DNA ligase (704 aa).

Residues 43–47 (DADYD), 92–93 (SL), and glutamate 124 each bind NAD(+). Lysine 126 functions as the N6-AMP-lysine intermediate in the catalytic mechanism. Arginine 147, glutamate 182, lysine 298, and lysine 322 together coordinate NAD(+). Positions 427, 430, 445, and 451 each coordinate Zn(2+). The 80-residue stretch at 625–704 (PVASPVAGRI…DGWLRLIGDA (80 aa)) folds into the BRCT domain.

The protein belongs to the NAD-dependent DNA ligase family. LigA subfamily. The cofactor is Mg(2+). Mn(2+) serves as cofactor.

The catalysed reaction is NAD(+) + (deoxyribonucleotide)n-3'-hydroxyl + 5'-phospho-(deoxyribonucleotide)m = (deoxyribonucleotide)n+m + AMP + beta-nicotinamide D-nucleotide.. In terms of biological role, DNA ligase that catalyzes the formation of phosphodiester linkages between 5'-phosphoryl and 3'-hydroxyl groups in double-stranded DNA using NAD as a coenzyme and as the energy source for the reaction. It is essential for DNA replication and repair of damaged DNA. The protein is DNA ligase of Cereibacter sphaeroides (strain KD131 / KCTC 12085) (Rhodobacter sphaeroides).